Reading from the N-terminus, the 246-residue chain is 1-(5-phosphoribosyl)-5-[(5-phosphoribosylamino)methylideneamino] imidazole-4-carboxamide isomerase (246 aa).

The active-site Proton acceptor is Asp-8. The active-site Proton donor is Asp-131.

It belongs to the HisA/HisF family.

It is found in the cytoplasm. It catalyses the reaction 1-(5-phospho-beta-D-ribosyl)-5-[(5-phospho-beta-D-ribosylamino)methylideneamino]imidazole-4-carboxamide = 5-[(5-phospho-1-deoxy-D-ribulos-1-ylimino)methylamino]-1-(5-phospho-beta-D-ribosyl)imidazole-4-carboxamide. It functions in the pathway amino-acid biosynthesis; L-histidine biosynthesis; L-histidine from 5-phospho-alpha-D-ribose 1-diphosphate: step 4/9. In Chromobacterium violaceum (strain ATCC 12472 / DSM 30191 / JCM 1249 / CCUG 213 / NBRC 12614 / NCIMB 9131 / NCTC 9757 / MK), this protein is 1-(5-phosphoribosyl)-5-[(5-phosphoribosylamino)methylideneamino] imidazole-4-carboxamide isomerase.